Consider the following 1174-residue polypeptide: Probable pyruvate-flavodoxin oxidoreductase (1174 aa).

2 consecutive 4Fe-4S ferredoxin-type domains span residues 680–709 (EIPI…AKVV) and 736–765 (YVLQ…NPEI). Cys689, Cys692, Cys695, Cys699, Cys745, Cys748, Cys751, Cys755, Cys819, Cys822, Cys847, and Cys1071 together coordinate [4Fe-4S] cluster.

This sequence belongs to the pyruvate:ferredoxin/flavodoxin oxidoreductase family. [4Fe-4S] cluster is required as a cofactor.

The enzyme catalyses oxidized [flavodoxin] + pyruvate + CoA + 2 H(+) = reduced [flavodoxin] + acetyl-CoA + CO2. In terms of biological role, oxidoreductase required for the transfer of electrons from pyruvate to flavodoxin. The polypeptide is Probable pyruvate-flavodoxin oxidoreductase (ydbK) (Escherichia coli (strain K12)).